We begin with the raw amino-acid sequence, 202 residues long: Large ribosomal subunit protein bL25 (202 aa).

It belongs to the bacterial ribosomal protein bL25 family. CTC subfamily. In terms of assembly, part of the 50S ribosomal subunit; part of the 5S rRNA/L5/L18/L25 subcomplex. Contacts the 5S rRNA. Binds to the 5S rRNA independently of L5 and L18.

This is one of the proteins that binds to the 5S RNA in the ribosome where it forms part of the central protuberance. This is Large ribosomal subunit protein bL25 from Chlorobium luteolum (strain DSM 273 / BCRC 81028 / 2530) (Pelodictyon luteolum).